Consider the following 399-residue polypeptide: uncharacterized protein (399 aa).

This is an uncharacterized protein from Aquifex aeolicus (strain VF5).